We begin with the raw amino-acid sequence, 224 residues long: Small ribosomal subunit protein uS3 (224 aa).

In terms of domain architecture, KH type-2 spans 38-106; sequence IRKFISKKLK…QVHINIVEIK (69 aa).

This sequence belongs to the universal ribosomal protein uS3 family. As to quaternary structure, part of the 30S ribosomal subunit. Forms a tight complex with proteins S10 and S14.

Its function is as follows. Binds the lower part of the 30S subunit head. Binds mRNA in the 70S ribosome, positioning it for translation. In Lactobacillus helveticus (strain DPC 4571), this protein is Small ribosomal subunit protein uS3.